Here is a 426-residue protein sequence, read N- to C-terminus: UDP-N-acetylglucosamine 1-carboxyvinyltransferase (426 aa).

22–23 (KN) contributes to the phosphoenolpyruvate binding site. Residue Arg-99 participates in UDP-N-acetyl-alpha-D-glucosamine binding. Cys-123 functions as the Proton donor in the catalytic mechanism. A 2-(S-cysteinyl)pyruvic acid O-phosphothioketal modification is found at Cys-123. UDP-N-acetyl-alpha-D-glucosamine is bound by residues 128-132 (RPIDL), Asp-313, and Ile-335.

This sequence belongs to the EPSP synthase family. MurA subfamily.

Its subcellular location is the cytoplasm. The catalysed reaction is phosphoenolpyruvate + UDP-N-acetyl-alpha-D-glucosamine = UDP-N-acetyl-3-O-(1-carboxyvinyl)-alpha-D-glucosamine + phosphate. Its pathway is cell wall biogenesis; peptidoglycan biosynthesis. Cell wall formation. Adds enolpyruvyl to UDP-N-acetylglucosamine. The sequence is that of UDP-N-acetylglucosamine 1-carboxyvinyltransferase from Zymomonas mobilis subsp. mobilis (strain ATCC 31821 / ZM4 / CP4).